Here is a 979-residue protein sequence, read N- to C-terminus: Pimaradiene synthase pbcA (979 aa).

The VYDTAW motif signature appears at 34–39 (VYDTAW). The DXDD B-type cyclization motif signature appears at 328–331 (DADD). Aspartate 665, glutamate 669, asparagine 865, aspartate 866, serine 869, and aspartate 873 together coordinate Mg(2+). The short motif at 665 to 669 (DEFME) is the DEXXE A-type cyclization motif element.

The protein belongs to the terpene synthase family. Mg(2+) is required as a cofactor.

The enzyme catalyses (2E,6E,10E)-geranylgeranyl diphosphate = ent-copalyl diphosphate. It catalyses the reaction ent-copalyl diphosphate = ent-pimara-8(14),15-diene + diphosphate. The protein operates within secondary metabolite biosynthesis; terpenoid biosynthesis. Bifunctional terpene synthase; part of the gene cluster that mediates the biosynthesis of the diterpene ent-pimara-8(14),15-diene (PD). Within the cluster, the HMG-CoA reductase AN1593 functions in the mevalonate pathway, which produces isoprenoid precursors. The geranylgeranyl pyrophosphate (GGPP) synthase AN1592 is needed in the formation of GGPP, the precursor for diterpenes. Lastly, the pimaradiene synthase pbcA performs the 2 cyclization steps that convert GGPP to ent-pimara-8(14),15-diene with ent-copalyl diphosphate as an intermediate. The putative roles of the remaining cluster enzymes in ent-pimara-8(14),15-diene biosynthesis is unclear. The cytochrome P450 monooxygenase AN1598, the glutathione S-transferase AN1595, the oxidoreductases AN1596 and AN1597 probably function as decorative enzymes. It is possible that in biological conditions the compound is oxidized to ent-pimara-8(14),15-dien-19-oic acid, which is a bioactive diterpene compound predominant in many plant extracts. This is Pimaradiene synthase pbcA from Emericella nidulans (strain FGSC A4 / ATCC 38163 / CBS 112.46 / NRRL 194 / M139) (Aspergillus nidulans).